We begin with the raw amino-acid sequence, 243 residues long: Small ribosomal subunit protein uS2 (243 aa).

This sequence belongs to the universal ribosomal protein uS2 family.

This is Small ribosomal subunit protein uS2 from Aliivibrio salmonicida (strain LFI1238) (Vibrio salmonicida (strain LFI1238)).